Consider the following 234-residue polypeptide: Leucyl/phenylalanyl-tRNA--protein transferase (234 aa).

The protein belongs to the L/F-transferase family.

It localises to the cytoplasm. The catalysed reaction is N-terminal L-lysyl-[protein] + L-leucyl-tRNA(Leu) = N-terminal L-leucyl-L-lysyl-[protein] + tRNA(Leu) + H(+). The enzyme catalyses N-terminal L-arginyl-[protein] + L-leucyl-tRNA(Leu) = N-terminal L-leucyl-L-arginyl-[protein] + tRNA(Leu) + H(+). It carries out the reaction L-phenylalanyl-tRNA(Phe) + an N-terminal L-alpha-aminoacyl-[protein] = an N-terminal L-phenylalanyl-L-alpha-aminoacyl-[protein] + tRNA(Phe). In terms of biological role, functions in the N-end rule pathway of protein degradation where it conjugates Leu, Phe and, less efficiently, Met from aminoacyl-tRNAs to the N-termini of proteins containing an N-terminal arginine or lysine. This is Leucyl/phenylalanyl-tRNA--protein transferase from Shigella flexneri serotype 5b (strain 8401).